The primary structure comprises 585 residues: Clathrin heavy chain linker domain-containing protein 1 (585 aa).

The stretch at 118–239 forms a coiled coil; that stretch reads QLEAKMRIID…DLRFRHQRLQ (122 aa).

In Rattus norvegicus (Rat), this protein is Clathrin heavy chain linker domain-containing protein 1 (Clhc1).